The sequence spans 393 residues: Protein FAM47E (393 aa).

A coiled-coil region spans residues 326-354 (VSHKAQEENFKKELQEQEELLADLHGTVA).

Belongs to the FAM47 family. As to quaternary structure, interacts with PRMT5; the interaction is direct. Interacts with WDR77.

It localises to the nucleus. It is found in the chromosome. Its subcellular location is the cytoplasm. Functionally, promotes histone methylation by localizing the arginine methyltransferase PRMT5 to chromatin. The sequence is that of Protein FAM47E (FAM47E) from Homo sapiens (Human).